A 474-amino-acid polypeptide reads, in one-letter code: MSGDVPAAVLPRLVISAPTSGAGKTTVATGLMAALRAAGYDVSGHKAGPDYIDPGYHSLATGRPGRNLDVHLHGENLLGPLLLHGASHPRPADLAVIEGMMGLYDGKLGGRGFASTAHVAALLDAPVVLVVDVSHVSRSAAAIVAGMAVFDQRIRIAGVILNRVGSRRHAAEVASAVEDVGVPVLGALRHDSGLAVPSRHLGLVPAEERAEAVAAVELLAERIAAQVDLTAVVEVARSAPPLHAQAWSAQEALRAAGFHPVSAQRDHPVVAVAGGQAFTFRYAEVEELLRAAGCRPVVFDPMSDPALPDGTAGIYLGGGFPEVYAAELAGNTALRTALRDAVRSGVPTVAECAGLLYLCRDVDGAPMVGALDAVGRMTSRLALGYYSALAPAETLVAAEGDRVPGHTFHRTTVTSTGEQAGPAWLLDGQPDGFSSDPAGIGRPTLHASYLHTHWAGCPQAAARFAAAVSTQRPC.

One can recognise a GATase cobBQ-type domain in the interval 269 to 459 (VVAVAGGQAF…LHTHWAGCPQ (191 aa)). Catalysis depends on cysteine 352, which acts as the Nucleophile.

The protein belongs to the CobB/CbiA family. Mg(2+) serves as cofactor.

The enzyme catalyses hydrogenobyrinate + 2 L-glutamine + 2 ATP + 2 H2O = hydrogenobyrinate a,c-diamide + 2 L-glutamate + 2 ADP + 2 phosphate + 2 H(+). It functions in the pathway cofactor biosynthesis; adenosylcobalamin biosynthesis; cob(II)yrinate a,c-diamide from precorrin-2 (aerobic route): step 9/10. In terms of biological role, catalyzes the ATP-dependent amidation of the two carboxylate groups at positions a and c of hydrogenobyrinate, using either L-glutamine or ammonia as the nitrogen source. This Thermobifida fusca (strain YX) protein is Hydrogenobyrinate a,c-diamide synthase.